Consider the following 119-residue polypeptide: Large ribosomal subunit protein bL20 (119 aa).

Belongs to the bacterial ribosomal protein bL20 family.

Binds directly to 23S ribosomal RNA and is necessary for the in vitro assembly process of the 50S ribosomal subunit. It is not involved in the protein synthesizing functions of that subunit. The chain is Large ribosomal subunit protein bL20 from Aromatoleum aromaticum (strain DSM 19018 / LMG 30748 / EbN1) (Azoarcus sp. (strain EbN1)).